The chain runs to 503 residues: MSTLEDGFPADKLFAQGYSYTYDDVIFLPHFIDFSTDAVSLSTRLSRRVPLSIPCVSSPMDTVSESHMAAAMASLGGIGIVHYNCGIAAQASIIRQAKSLKHPIASDAGVKFPEYEITSLDAFGPSSFVFVEQTGTMTTPKLLGYVTKSQWKRMNYEQREMKIYDYMKSCDSSDYCVPWEIDFEKLEFVLEDKQKGFVVLERDGETVNVVTKDDIQRVKGYPKSGPGTVGPDGEWMVGAAIGTRESDKERLEHLVNVGVNAVVLDSSQGNSIYQLEMIKYVKKTYPELDVIGGNVVTMYQAQNLIQAGVDGLRVGMGSGSICTTQEVCAVGRGQATAVYKVCSIAAQSGIPVIADGGISNSGHIVKALVLGASTVMMGSFLAGSTEAPGGYEYTNGKRIKKYRGMGSLEAMTKGSDQRYLGDQTKLKIAQGVVGAVADKGSVLKLIPYTMHAVKQGFQDLGASSLQSAHGLLRSNILRLEARTGAAQVEGGVHGLVSYEKKSF.

Ser-2 carries the post-translational modification N-acetylserine. The CBS domain maps to 167-225 (MKSCDSSDYCVPWEIDFEKLEFVLEDKQKGFVVLERDGETVNVVTKDDIQRVKGYPKSG). NAD(+)-binding positions include 265–267 (DSS) and 315–317 (GMG). K(+)-binding residues include Gly-317 and Gly-319. Ser-320 contacts IMP. K(+) is bound at residue Cys-322. Catalysis depends on Cys-322, which acts as the Thioimidate intermediate. Residues 355–357 (DGG), 378–379 (GS), and 402–406 (YRGMG) each bind IMP. Arg-418 (proton acceptor) is an active-site residue. Gln-430 contacts IMP. 3 residues coordinate K(+): Glu-489, Gly-490, and Gly-491.

It belongs to the IMPDH/GMPR family. Homotetramer. Requires K(+) as cofactor.

The protein resides in the cytoplasm. The catalysed reaction is IMP + NAD(+) + H2O = XMP + NADH + H(+). Its pathway is purine metabolism; XMP biosynthesis via de novo pathway; XMP from IMP: step 1/1. With respect to regulation, mycophenolic acid (MPA) is a non-competitive inhibitor that prevents formation of the closed enzyme conformation by binding to the same site as the amobile flap. In contrast, mizoribine monophosphate (MZP) is a competitive inhibitor that induces the closed conformation. MPA is a potent inhibitor of mammalian IMPDHs but a poor inhibitor of the bacterial enzymes. MZP is a more potent inhibitor of bacterial IMPDH. Catalyzes the conversion of inosine 5'-phosphate (IMP) to xanthosine 5'-phosphate (XMP), the first committed and rate-limiting step in the de novo synthesis of guanine nucleotides, and therefore plays an important role in the regulation of cell growth. The polypeptide is Inosine-5'-monophosphate dehydrogenase 1 (Arabidopsis thaliana (Mouse-ear cress)).